The following is a 254-amino-acid chain: uncharacterized protein (254 aa).

The first 22 residues, 1–22, serve as a signal peptide directing secretion; that stretch reads MKRLKKIVLCISFLFLTIFIGG. A lipid anchor (N-palmitoyl cysteine) is attached at C23. A lipid anchor (S-diacylglycerol cysteine) is attached at C23.

It belongs to the staphylococcal tandem lipoprotein family.

It is found in the cell membrane. This is an uncharacterized protein from Staphylococcus aureus (strain MSSA476).